The sequence spans 310 residues: Protein A56 (310 aa).

The first 16 residues, 1–16 (MKQLSIVILLLSIVYT), serve as a signal peptide directing secretion. Over 17–275 (TKPHPTQISK…TKYTTSDFIE (259 aa)) the chain is Virion surface. Residues 19-121 (PHPTQISKKL…TNDTDKIDYE (103 aa)) enclose the Ig-like V-type domain. Cys36 and Cys105 are oxidised to a cystine. N-linked (GlcNAc...) asparagine; by host glycosylation is found at Asn39, Asn113, and Asn133. The interval 153-195 (HTEEQHDSDTTICTSESTTQISETSESTTSSQISETSESTSYG) is disordered. Residues 162 to 193 (TTICTSESTTQISETSESTTSSQISETSESTS) show a composition bias toward low complexity. An N-linked (GlcNAc...) asparagine; by host glycan is attached at Asn203. Residues 276 to 300 (IFGIVSLILLLAVAIFCIIYYFCSG) form a helical membrane-spanning segment. Topologically, residues 301-310 (RSRKQETNIL) are intravirion.

In terms of assembly, heterodimerizes with K2. The heterodimer A56/K2 interacts with components of the entry fusion complex A16 and G9. Interacts with K2 protein. Heterodimer with C3/VPC protein; disulfide-linked. Glycosylated; contains phosphate and sulfate-substituted glycans. O-glycosylation is required for hemagglutination and hemadsorption activities of infected cell membranes.

Its subcellular location is the virion membrane. It localises to the host membrane. In terms of biological role, prevents cell to cell fusion by interacting with and directing the viral K2 protein on the host plasma membrane. The A56-K2 complex associates with components of the entry fusion complex (EFC) presumably to avoid superinfection and syncytium formation. Via its interaction with C3/VCP protein, protects the infected cell and probably also the extracellular enveloped virus from complement attack. The chain is Protein A56 (HA) from Raccoon poxvirus (RCN).